The chain runs to 104 residues: Zinc-containing ferredoxin-1 (104 aa).

An N-terminal extension region spans residues 2 to 37; the sequence is GIDPNYRTNRQVVGEHSGHKVYGPVEPPKVLGIHGT. The Zn(2+) site is built by His-17 and His-20. Lys-30 carries the N6-methyllysine modification. Zn(2+) is bound at residue His-35. 2 consecutive 4Fe-4S ferredoxin-type domains span residues 38 to 66 and 75 to 104; these read IVGV…WYDT and KADP…VKPP. Cys-46 and Cys-52 together coordinate [3Fe-4S] cluster. A [4Fe-4S] cluster-binding site is contributed by Cys-56. Asp-77 contacts Zn(2+). [4Fe-4S] cluster is bound by residues Cys-84, Cys-87, and Cys-90. Residue Cys-94 participates in [3Fe-4S] cluster binding.

[3Fe-4S] cluster serves as cofactor. The cofactor is [4Fe-4S] cluster. It depends on Zn(2+) as a cofactor.

Its function is as follows. Ferredoxins are iron-sulfur proteins that transfer electrons in a wide variety of metabolic reactions. This Sulfurisphaera tokodaii (strain DSM 16993 / JCM 10545 / NBRC 100140 / 7) (Sulfolobus tokodaii) protein is Zinc-containing ferredoxin-1 (zfx1).